A 492-amino-acid chain; its full sequence is Serine/threonine-protein kinase 3 (492 aa).

Residues 26 to 277 (FDVLEKLGEG…ATQLLQHPFI (252 aa)) enclose the Protein kinase domain. Residues 32-40 (LGEGSYGSV) and Lys55 contribute to the ATP site. Asp145 functions as the Proton acceptor in the catalytic mechanism. Thr179 is modified (phosphothreonine; by autocatalysis). 2 coiled-coil regions span residues 286 to 328 (LRDL…TMVK) and 443 to 476 (NLDF…AKRQ). Residues 297–307 (KAKRQQEQQRE) show a composition bias toward basic and acidic residues. Residues 297–339 (KAKRQQEQQRELEEDDENSEEEVEVDSHTMVKSGSESAGTMRA) form a disordered region. Over residues 308–320 (LEEDDENSEEEVE) the composition is skewed to acidic residues. The segment covering 326-339 (MVKSGSESAGTMRA) has biased composition (polar residues). In terms of domain architecture, SARAH spans 438-485 (FDFLKNLDFEELQMRLTALDPMMEREIEELRQRYTAKRQPILDAMDAK).

The protein belongs to the protein kinase superfamily. STE Ser/Thr protein kinase family. STE20 subfamily. As to quaternary structure, homodimer; mediated via the coiled-coil region. Requires Mg(2+) as cofactor.

It is found in the cytoplasm. The protein localises to the nucleus. The catalysed reaction is L-seryl-[protein] + ATP = O-phospho-L-seryl-[protein] + ADP + H(+). It carries out the reaction L-threonyl-[protein] + ATP = O-phospho-L-threonyl-[protein] + ADP + H(+). Inhibited by the C-terminal non-catalytic region. Activated by caspase-cleavage. Full activation also requires homodimerization and autophosphorylation of Thr-179. In terms of biological role, stress-activated, pro-apoptotic kinase which, following caspase-cleavage, enters the nucleus and induces chromatin condensation followed by internucleosomal DNA fragmentation. Key component of the Hippo signaling pathway which plays a pivotal role in organ size control and tumor suppression by restricting proliferation and promoting apoptosis. The core of this pathway is composed of a kinase cascade wherein stk3/mst2 and stk4/mst1, in complex with its regulatory protein sav1, phosphorylates and activates lats1/2 in complex with its regulatory protein mob1, which in turn phosphorylates and inactivates yap1 oncoprotein and wwtr1/taz. Phosphorylation of yap1 by lats2 inhibits its translocation into the nucleus to regulate cellular genes important for cell proliferation, cell death, and cell migration. This is Serine/threonine-protein kinase 3 (stk3) from Danio rerio (Zebrafish).